The chain runs to 1234 residues: DNA-directed RNA polymerase subunit beta (1234 aa).

It belongs to the RNA polymerase beta chain family. In terms of assembly, the RNAP catalytic core consists of 2 alpha, 1 beta, 1 beta' and 1 omega subunit. When a sigma factor is associated with the core the holoenzyme is formed, which can initiate transcription.

The catalysed reaction is RNA(n) + a ribonucleoside 5'-triphosphate = RNA(n+1) + diphosphate. DNA-dependent RNA polymerase catalyzes the transcription of DNA into RNA using the four ribonucleoside triphosphates as substrates. This Clostridium perfringens (strain SM101 / Type A) protein is DNA-directed RNA polymerase subunit beta.